Here is a 1798-residue protein sequence, read N- to C-terminus: Focadhesin (1798 aa).

Lys-816 carries the post-translational modification N6-acetyllysine.

In terms of assembly, interacts with VCL. Expressed by glial and neuronal cells in brain.

It is found in the cell junction. The protein resides in the focal adhesion. The protein localises to the cytoplasm. It localises to the cytosol. In terms of biological role, required for the maintenance of SKIC2 and SKIC3 proteostatic levels in the liver. May be involved in the regulation of RNA degradation by the exosome complex. Potential tumor suppressor in gliomas. The sequence is that of Focadhesin (Focad) from Mus musculus (Mouse).